The sequence spans 388 residues: MRYLTAGESHGPSLTAIIEGIPAGLTLHPADIDHELQRRQGGYGRGARMSIETDRVQISSGVRHGKTTGAPITLTVINKDHQKWLDVMAVGDIEETLKLKRRVKHPRPGHADLVGGIKYHFNDLRDALERSSARETTMRVAVGAVAKRILAELGIDMLHHILIFGGITITILYKLSFRELQERALHSELSIVNPKQEEEIKTYIDKIKKEGDTIGGIIETIVQGVPAGLGSYVQWDKKLDAKLAQAVLSINAFKGVEFGVGFDMGFQKGSQVMDEITWTPTQGYGRQTNHLGGFEGGMTTGQPLVVKGVMKPIPTLYKPLMSVDIDSHEPYKATVERSDPTALPAAGVIMENVVATVLAKEILETFSSTTMSELQKAFSDYRAYVKQF.

NADP(+) is bound by residues Arg-39 and Arg-45. Residues 130–132 (RSS), 251–252 (NA), Gly-296, 311–315 (KPIPT), and Arg-337 contribute to the FMN site.

The protein belongs to the chorismate synthase family. In terms of assembly, homotetramer. Requires FMNH2 as cofactor.

It carries out the reaction 5-O-(1-carboxyvinyl)-3-phosphoshikimate = chorismate + phosphate. It functions in the pathway metabolic intermediate biosynthesis; chorismate biosynthesis; chorismate from D-erythrose 4-phosphate and phosphoenolpyruvate: step 7/7. Functionally, catalyzes the anti-1,4-elimination of the C-3 phosphate and the C-6 proR hydrogen from 5-enolpyruvylshikimate-3-phosphate (EPSP) to yield chorismate, which is the branch point compound that serves as the starting substrate for the three terminal pathways of aromatic amino acid biosynthesis. This reaction introduces a second double bond into the aromatic ring system. The polypeptide is Chorismate synthase (Streptococcus pyogenes serotype M28 (strain MGAS6180)).